Reading from the N-terminus, the 347-residue chain is tRNA pseudouridine synthase D (347 aa).

The Nucleophile role is filled by aspartate 81. One can recognise a TRUD domain in the interval 158–304 (GVPNYFGNQR…MRHDRRAIAL (147 aa)).

It belongs to the pseudouridine synthase TruD family.

It carries out the reaction uridine(13) in tRNA = pseudouridine(13) in tRNA. In terms of biological role, responsible for synthesis of pseudouridine from uracil-13 in transfer RNAs. The sequence is that of tRNA pseudouridine synthase D from Vibrio vulnificus (strain CMCP6).